The primary structure comprises 357 residues: MNSSARTRRDLPESPYLAAVNGRKPHRVPVWFMRQAGRSLPEYRALRAQHDMLSACFDAELVCEITLQPVRRHDVDAAILFSDIVVPLLGAGIDLDIVAGVGPVIASPVRTAADVAAMKPLERQRVQPIADAVRLLVSALVEVPLIGFAGAPFTLASYLIEGGPSRHHARTKAMMLADPDSWHALMEKLTDITVGFLRVQLDAGVDAVQVFDSWAGALSLANYRSYVQPHSARVFAALADYGVPMTHFGVGTAELLGAMSAALKPAPATVVGVDWRTALADAATRVMPGTALQGNLDPVVLLAGWPVVETAARAVVDDGRRAVDAGAAGHVFNLGHGVLPETDPGVLTELVSLVHSL.

Substrate contacts are provided by residues 34-38, Asp83, Tyr158, Ser213, and His336; that span reads RQAGR.

Belongs to the uroporphyrinogen decarboxylase family. Homodimer.

The protein resides in the cytoplasm. The catalysed reaction is uroporphyrinogen III + 4 H(+) = coproporphyrinogen III + 4 CO2. Its pathway is porphyrin-containing compound metabolism; protoporphyrin-IX biosynthesis; coproporphyrinogen-III from 5-aminolevulinate: step 4/4. Functionally, catalyzes the decarboxylation of four acetate groups of uroporphyrinogen-III to yield coproporphyrinogen-III. The polypeptide is Uroporphyrinogen decarboxylase (Mycolicibacterium paratuberculosis (strain ATCC BAA-968 / K-10) (Mycobacterium paratuberculosis)).